We begin with the raw amino-acid sequence, 60 residues long: FIIKVPLVKKKSLRKNLKEHGLLKDFLKKHSPNPASKYFPQEAAVMATQPLENYMDMEYF.

Positions 1–45 are cleaved as a propeptide — activation peptide; the sequence is FIIKVPLVKKKSLRKNLKEHGLLKDFLKKHSPNPASKYFPQEAAV.

The protein belongs to the peptidase A1 family.

It localises to the secreted. The enzyme catalyses Preferential cleavage: hydrophobic, preferably aromatic, residues in P1 and P1' positions. Cleaves 1-Phe-|-Val-2, 4-Gln-|-His-5, 13-Glu-|-Ala-14, 14-Ala-|-Leu-15, 15-Leu-|-Tyr-16, 16-Tyr-|-Leu-17, 23-Gly-|-Phe-24, 24-Phe-|-Phe-25 and 25-Phe-|-Tyr-26 bonds in the B chain of insulin.. Shows particularly broad specificity; although bonds involving phenylalanine and leucine are preferred, many others are also cleaved to some extent. The polypeptide is Pepsin A (PGA) (Ursus thibetanus (Asiatic black bear)).